The following is a 155-amino-acid chain: Ribonuclease H (155 aa).

Residues 1 to 143 (MNQVEIYTDG…ADALANRGVD (143 aa)) form the RNase H type-1 domain. The Mg(2+) site is built by Asp-9, Glu-47, Asp-69, and Asp-135.

Belongs to the RNase H family. As to quaternary structure, monomer. Mg(2+) is required as a cofactor.

The protein resides in the cytoplasm. The catalysed reaction is Endonucleolytic cleavage to 5'-phosphomonoester.. Its function is as follows. Endonuclease that specifically degrades the RNA of RNA-DNA hybrids. This is Ribonuclease H from Verminephrobacter eiseniae (strain EF01-2).